A 292-amino-acid chain; its full sequence is Elongation factor Ts (292 aa).

An involved in Mg(2+) ion dislocation from EF-Tu region spans residues 80-83 (TDFV).

The protein belongs to the EF-Ts family.

It is found in the cytoplasm. Its function is as follows. Associates with the EF-Tu.GDP complex and induces the exchange of GDP to GTP. It remains bound to the aminoacyl-tRNA.EF-Tu.GTP complex up to the GTP hydrolysis stage on the ribosome. This Psychrobacter sp. (strain PRwf-1) protein is Elongation factor Ts.